A 624-amino-acid polypeptide reads, in one-letter code: Actin-related protein 8 (624 aa).

The residue at position 1 (Met1) is an N-acetylmethionine. Residues 1–25 are compositionally biased toward basic and acidic residues; it reads MTQAEKGDAENGKEKGGEKEKEQRG. Residues 1 to 29 are disordered; sequence MTQAEKGDAENGKEKGGEKEKEQRGVKRP. 2 residues coordinate ATP: Ser55 and Thr56. Ser132 is subject to Phosphoserine. 283–286 provides a ligand contact to ATP; it reads DVGD. Ser412 carries the phosphoserine modification. Positions 430 to 462 are disordered; the sequence is SKQEQSAKATADRKSASKPIGFEGDLRGQSSDL.

It belongs to the actin family. ARP8 subfamily. As to quaternary structure, component of the chromatin remodeling INO80 complex; specifically part of a complex module associated with the DBINO domain of INO80. Exists as monomers and dimers, but the dimer is most probably the biologically relevant form required for stable interactions with histones that exploits the twofold symmetry of the nucleosome core.

The protein resides in the nucleus. It is found in the chromosome. Plays an important role in the functional organization of mitotic chromosomes. Exhibits low basal ATPase activity, and unable to polymerize. In terms of biological role, proposed core component of the chromatin remodeling INO80 complex which is involved in transcriptional regulation, DNA replication and probably DNA repair. Required for the recruitment of INO80 (and probably the INO80 complex) to sites of DNA damage Strongly prefer nucleosomes and H3-H4 tetramers over H2A-H2B dimers, suggesting it may act as a nucleosome recognition module within the complex. The protein is Actin-related protein 8 (Actr8) of Mus musculus (Mouse).